The primary structure comprises 262 residues: Phosphoribosyl 1,2-cyclic phosphate 1,2-diphosphodiesterase (262 aa).

His-6, His-8, Asp-13, His-38, Glu-63, His-76, His-193, Asp-245, and His-247 together coordinate Mn(2+).

This sequence belongs to the PHP family. Mn(2+) serves as cofactor.

The catalysed reaction is alpha-D-ribose 1,2-cyclic phosphate 5-phosphate + H2O = D-ribose 2,5-bisphosphate + H(+). The enzyme catalyses D-ribose 2,5-bisphosphate + H2O = D-ribose 5-phosphate + phosphate. Functionally, involved in degradation of methylphosphonate. Catalyzes the hydrolysis of the phosphate ester at carbon-1 of 5-phospho-D-ribose 1,2-cyclic phosphate to form ribose 2,5-bisphosphate. This intermediate is then hydrolyzed to ribose-5-phosphate and inorganic phosphate. The chain is Phosphoribosyl 1,2-cyclic phosphate 1,2-diphosphodiesterase from Eggerthella lenta (strain ATCC 25559 / DSM 2243 / CCUG 17323 / JCM 9979 / KCTC 3265 / NCTC 11813 / VPI 0255 / 1899 B) (Eubacterium lentum).